The following is a 222-amino-acid chain: Putative cobalt transport protein CbiM (222 aa).

6 helical membrane-spanning segments follow: residues 8 to 28 (LPMEWAIVWYIISAIVVGYGI), 43 to 63 (PLLAISGAFMFVLSSLKLPSV), 75 to 95 (LGAILFGPAITSVLATIVLLF), 107 to 127 (TLGANIFSMGIMGPFVGYLVF), 134 to 154 (LNITWVVMLTAIFADWATYLT), and 178 to 198 (IFAITQIPLAIAEGLITALLW).

The protein belongs to the CbiM family. As to quaternary structure, forms an energy-coupling factor (ECF) transporter complex composed of an ATP-binding protein (A component, CbiO), a transmembrane protein (T component, CbiQ) and 2 possible substrate-capture proteins (S components, CbiM and CbiN) of unknown stoichimetry.

The protein resides in the cell membrane. Its pathway is cofactor biosynthesis; adenosylcobalamin biosynthesis. Its function is as follows. Part of the energy-coupling factor (ECF) transporter complex CbiMNOQ involved in cobalt import. This Methanococcus voltae (strain ATCC BAA-1334 / A3) protein is Putative cobalt transport protein CbiM.